A 345-amino-acid polypeptide reads, in one-letter code: Transcription initiation factor IIB (345 aa).

The segment at Val-8–Ala-40 adopts a TFIIB-type zinc-finger fold. Residues Cys-12, Cys-15, Cys-32, and Cys-35 each contribute to the Zn(2+) site. Disordered stretches follow at residues Asp-59–Ser-89 and Pro-318–Thr-345. Low complexity predominate over residues Thr-71 to Ala-83.

This sequence belongs to the TFIIB family. In terms of assembly, monomer. Interacts with RNA polymerase II subunits RPB1 and RPB2. Interacts with TBP; the interaction is direct.

The protein resides in the nucleus. Functionally, specifically binds to the promoter of the spliced leader (SL) RNA gene and thus is essential for SLRNA transcription. The polypeptide is Transcription initiation factor IIB (Trypanosoma brucei brucei).